The chain runs to 338 residues: Egl nine homolog 1 (338 aa).

A compositionally biased stretch (low complexity) spans proline 1–arginine 11. Positions proline 1–glutamine 99 are disordered. At serine 52 the chain carries Phosphoserine. 2 positions are modified to S-nitrosocysteine: cysteine 116 and cysteine 123. Positions valine 156 to isoleucine 166 are beta(2)beta(3) 'finger-like' loop. In terms of domain architecture, Fe2OG dioxygenase spans glycine 209 to aspartate 307. Position 217 is an S-nitrosocysteine (cysteine 217). Fe cation-binding residues include histidine 228 and aspartate 230. S-nitrosocysteine occurs at positions 238 and 241. Residue histidine 289 coordinates Fe cation. Arginine 298 is a binding site for 2-oxoglutarate.

Monomer. Interacts with ING4; the interaction inhibits the hydroxylation of HIF alpha proteins. Interacts with PTGES3 (via PXLE motif); thereby recruiting EGLN1 to the HSP90 pathway to facilitate HIF alpha proteins hydroxylation. Interacts with LIMD1. Found in a complex composed of LIMD1, VHL, EGLN1/PHD2, ELOB and CUL2. Interacts with EPAS1. Interacts with CBFA2T3 and HIF1A. Requires Fe(2+) as cofactor. The cofactor is L-ascorbate. Post-translationally, S-nitrosylation inhibits the enzyme activity up to 60% under aerobic conditions. Chelation of Fe(2+) has no effect on the S-nitrosylation. It is uncertain whether nitrosylation occurs on Cys-238 or Cys-241. Expressed in heart, liver, kidney, brain, liver and testis. Highest levels in heart, lowest in liver.

It localises to the cytoplasm. Its subcellular location is the nucleus. It carries out the reaction L-prolyl-[hypoxia-inducible factor alpha subunit] + 2-oxoglutarate + O2 = trans-4-hydroxy-L-prolyl-[hypoxia-inducible factor alpha subunit] + succinate + CO2. Increased activation in hypoxia. Hydroxylation of the C-terminal ODD domain (CODD) proline of HIF1A is activated by cyclosporin A (CsA). In terms of biological role, cellular oxygen sensor that catalyzes, under normoxic conditions, the post-translational formation of 4-hydroxyproline in hypoxia-inducible factor (HIF) alpha proteins. Hydroxylates a specific proline found in each of the oxygen-dependent degradation (ODD) domains (N-terminal, NODD, and C-terminal, CODD) of HIF1A. Also hydroxylates HIF2A. Has a preference for the CODD site for both HIF1A and HIF1B. Hydroxylated HIFs are then targeted for proteasomal degradation via the von Hippel-Lindau ubiquitination complex. Under hypoxic conditions, the hydroxylation reaction is attenuated allowing HIFs to escape degradation resulting in their translocation to the nucleus, heterodimerization with HIF1B, and increased expression of hypoxy-inducible genes. EGLN1 is the most important isozyme under normoxia and, through regulating the stability of HIF1, involved in various hypoxia-influenced processes such as angiogenesis in retinal and cardiac functionality. Target proteins are preferentially recognized via a LXXLAP motif. This chain is Egl nine homolog 1 (Egln1), found in Rattus norvegicus (Rat).